A 128-amino-acid polypeptide reads, in one-letter code: Large ribosomal subunit protein bL19 (128 aa).

This sequence belongs to the bacterial ribosomal protein bL19 family.

Functionally, this protein is located at the 30S-50S ribosomal subunit interface and may play a role in the structure and function of the aminoacyl-tRNA binding site. The chain is Large ribosomal subunit protein bL19 from Ralstonia nicotianae (strain ATCC BAA-1114 / GMI1000) (Ralstonia solanacearum).